Consider the following 42-residue polypeptide: Photosystem I reaction center subunit IX (42 aa).

A helical membrane pass occupies residues 7–27; it reads YLSVAPVLSTLWFGILAGLLI.

Belongs to the PsaJ family.

Its subcellular location is the plastid. The protein resides in the chloroplast thylakoid membrane. May help in the organization of the PsaE and PsaF subunits. This chain is Photosystem I reaction center subunit IX, found in Lemna minor (Common duckweed).